Consider the following 892-residue polypeptide: MTLITDSESIGVCESSYTPEEERRIVTELNNEAEADLKEGNLYFVISNRWYTRWQRFVGLLTEEFRSGEPSEVTRPGPIDNHDIIDSESDASDPQLRMMLEEGVDYTLVQQEVWRKLVKWYKGGPPVPRKLISQGFYTKSFSVEVYLLCLTLTDSRDESTTIIRLSKQASIGQLYEMVCAGKGVAKEKARIWDYFEKKKSVLLDPSSEQSVEEAGLQFNQDILLEVDGSASSQFVMSLAENELAMVPLEPMRSDAMDIVRGGGTLSNGHSNGFKFSFFGRNTFKDDVSSRTFGKGEKRGLGGLQNLGNTCFMNSTLQCLAHTPPIVEYFLQDYRSDINAKNPLGMRGELAIAFGELLRKLWSSGQNTVAPRAFKTKLARFAPQFSGYNQHDSQEMLAFLLDGLHEDLNKVKRKPYIEAKDSDGRPDDEVAEEKWKYHKARNDSVIVDVFQGQYKSTLVCPDCGKISITFDPFMYLSLPLPSSRTRSMTVTVFYGDGSHLPMPYTVTVPKDGSCRDLSNALGTACCLDNDESLLLAEVYDHKVFKYYENPRELLNGIKDNEHIVAYRFKQMHKGPGKVKLEILHGEQEKSSDRGPKCFGTPLVTYINKEPLSGTDIATSISGLLSPLRRVHMSCVVNSGNENGHVPDESSRSILSRDTETEDNDRELSLSLLRDYYSFNLQPLESDSVVNPGSVTKVLVKWNEKEHEKYDSSYLNDLPKVHKNVLAKKTMQEGISLFSCLEAFLAEEPLGPDDMWYCPGCKEHRQANKKLDLWKLPDILVFHLKRFTYSRYFKNKIDTLVNFHIHDLDLSKYVKNEDGQSYLYELYAISNHYGGLGGGHYTAYAKLMDETKWYNFDDSRVSAVNESEIKTSAAYVLFYQRVKSDSETSDMKMD.

The DUSP domain occupies 17–132 (YTPEEERRIV…GGPPVPRKLI (116 aa)). The interval 69–89 (EPSEVTRPGPIDNHDIIDSES) is disordered. Residues 301 to 880 (GGLQNLGNTC…AAYVLFYQRV (580 aa)) form the USP domain. Cys-310 acts as the Nucleophile in catalysis. The segment at 636–660 (NSGNENGHVPDESSRSILSRDTETE) is disordered. Basic and acidic residues predominate over residues 643–657 (HVPDESSRSILSRDT). The Proton acceptor role is filled by His-838.

This sequence belongs to the peptidase C19 family.

It catalyses the reaction Thiol-dependent hydrolysis of ester, thioester, amide, peptide and isopeptide bonds formed by the C-terminal Gly of ubiquitin (a 76-residue protein attached to proteins as an intracellular targeting signal).. Recognizes and hydrolyzes the peptide bond at the C-terminal Gly of ubiquitin. Involved in the processing of poly-ubiquitin precursors as well as that of ubiquitinated proteins. The sequence is that of Putative ubiquitin carboxyl-terminal hydrolase 11 (UBP11) from Arabidopsis thaliana (Mouse-ear cress).